Consider the following 880-residue polypeptide: Valine--tRNA ligase (880 aa).

The 'HIGH' region motif lies at 51-61 (PNVTGELHLGH). The 'KMSKS' region signature appears at 529–533 (KMSKT). Position 532 (K532) interacts with ATP. Residues 815–854 (MSTMVDLEVEAKRVKAEISELEIQIERLSTRLSDEQFLAK) are a coiled coil.

Belongs to the class-I aminoacyl-tRNA synthetase family. ValS type 1 subfamily. In terms of assembly, monomer.

It is found in the cytoplasm. The catalysed reaction is tRNA(Val) + L-valine + ATP = L-valyl-tRNA(Val) + AMP + diphosphate. In terms of biological role, catalyzes the attachment of valine to tRNA(Val). As ValRS can inadvertently accommodate and process structurally similar amino acids such as threonine, to avoid such errors, it has a 'posttransfer' editing activity that hydrolyzes mischarged Thr-tRNA(Val) in a tRNA-dependent manner. This is Valine--tRNA ligase from Dehalococcoides mccartyi (strain CBDB1).